Here is a 278-residue protein sequence, read N- to C-terminus: Shikimate dehydrogenase (NADP(+)) (278 aa).

Residues 14-16 (SKS) and T61 each bind shikimate. K65 acts as the Proton acceptor in catalysis. 2 residues coordinate shikimate: N86 and D102. NADP(+) contacts are provided by residues 127–131 (GAGGA), 151–156 (NRTASK), and M221. Residue Y223 coordinates shikimate. Residue G245 coordinates NADP(+).

It belongs to the shikimate dehydrogenase family. As to quaternary structure, homodimer.

The catalysed reaction is shikimate + NADP(+) = 3-dehydroshikimate + NADPH + H(+). It participates in metabolic intermediate biosynthesis; chorismate biosynthesis; chorismate from D-erythrose 4-phosphate and phosphoenolpyruvate: step 4/7. Functionally, involved in the biosynthesis of the chorismate, which leads to the biosynthesis of aromatic amino acids. Catalyzes the reversible NADPH linked reduction of 3-dehydroshikimate (DHSA) to yield shikimate (SA). The protein is Shikimate dehydrogenase (NADP(+)) of Saccharophagus degradans (strain 2-40 / ATCC 43961 / DSM 17024).